The chain runs to 336 residues: Holliday junction branch migration complex subunit RuvB (336 aa).

The segment at 4–184 (ADRLIQPQVI…FGIPLRLEFY (181 aa)) is large ATPase domain (RuvB-L). ATP contacts are provided by residues Arg-24, Gly-65, Lys-68, Thr-69, Thr-70, 131–133 (EDY), Arg-174, Tyr-184, and Arg-221. Thr-69 is a Mg(2+) binding site. Residues 185-255 (NIKDLSTIVI…VAELALDMLD (71 aa)) are small ATPAse domain (RuvB-S). A head domain (RuvB-H) region spans residues 258–336 (AEGFDYMDRK…HFNLIQPEAK (79 aa)). DNA is bound by residues Arg-294, Arg-313, and Arg-318.

This sequence belongs to the RuvB family. In terms of assembly, homohexamer. Forms an RuvA(8)-RuvB(12)-Holliday junction (HJ) complex. HJ DNA is sandwiched between 2 RuvA tetramers; dsDNA enters through RuvA and exits via RuvB. An RuvB hexamer assembles on each DNA strand where it exits the tetramer. Each RuvB hexamer is contacted by two RuvA subunits (via domain III) on 2 adjacent RuvB subunits; this complex drives branch migration. In the full resolvosome a probable DNA-RuvA(4)-RuvB(12)-RuvC(2) complex forms which resolves the HJ.

The protein localises to the cytoplasm. The enzyme catalyses ATP + H2O = ADP + phosphate + H(+). The RuvA-RuvB-RuvC complex processes Holliday junction (HJ) DNA during genetic recombination and DNA repair, while the RuvA-RuvB complex plays an important role in the rescue of blocked DNA replication forks via replication fork reversal (RFR). RuvA specifically binds to HJ cruciform DNA, conferring on it an open structure. The RuvB hexamer acts as an ATP-dependent pump, pulling dsDNA into and through the RuvAB complex. RuvB forms 2 homohexamers on either side of HJ DNA bound by 1 or 2 RuvA tetramers; 4 subunits per hexamer contact DNA at a time. Coordinated motions by a converter formed by DNA-disengaged RuvB subunits stimulates ATP hydrolysis and nucleotide exchange. Immobilization of the converter enables RuvB to convert the ATP-contained energy into a lever motion, pulling 2 nucleotides of DNA out of the RuvA tetramer per ATP hydrolyzed, thus driving DNA branch migration. The RuvB motors rotate together with the DNA substrate, which together with the progressing nucleotide cycle form the mechanistic basis for DNA recombination by continuous HJ branch migration. Branch migration allows RuvC to scan DNA until it finds its consensus sequence, where it cleaves and resolves cruciform DNA. The protein is Holliday junction branch migration complex subunit RuvB of Shewanella piezotolerans (strain WP3 / JCM 13877).